The sequence spans 167 residues: MARRFRGESNHKVDSKGRVSIPASFRRVLEAGDPNWQSGGNPELVIVYGDHRRKFLECYTMEAIDEVDAKIDALPRGSMERKMLQRMFHGQSFPTSVDETGRLVLPAKLRTKIALEDEAFFIAAGDTFQIWNPATYDQEELAAAEEWLDELPEDFDPMQYLDGAGGS.

2 SpoVT-AbrB domains span residues 8 to 51 and 92 to 135; these read ESNH…YGDH and SFPT…NPAT.

This sequence belongs to the MraZ family. As to quaternary structure, forms oligomers.

It localises to the cytoplasm. The protein resides in the nucleoid. The sequence is that of Transcriptional regulator MraZ from Ruegeria pomeroyi (strain ATCC 700808 / DSM 15171 / DSS-3) (Silicibacter pomeroyi).